Here is a 320-residue protein sequence, read N- to C-terminus: Acetyl-coenzyme A carboxylase carboxyl transferase subunit alpha (320 aa).

The CoA carboxyltransferase C-terminal domain maps to 33 to 294 (AFDGEIESLR…GDAVEEELKA (262 aa)).

This sequence belongs to the AccA family. Acetyl-CoA carboxylase is a heterohexamer composed of biotin carboxyl carrier protein (AccB), biotin carboxylase (AccC) and two subunits each of ACCase subunit alpha (AccA) and ACCase subunit beta (AccD).

The protein localises to the cytoplasm. It catalyses the reaction N(6)-carboxybiotinyl-L-lysyl-[protein] + acetyl-CoA = N(6)-biotinyl-L-lysyl-[protein] + malonyl-CoA. It participates in lipid metabolism; malonyl-CoA biosynthesis; malonyl-CoA from acetyl-CoA: step 1/1. Component of the acetyl coenzyme A carboxylase (ACC) complex. First, biotin carboxylase catalyzes the carboxylation of biotin on its carrier protein (BCCP) and then the CO(2) group is transferred by the carboxyltransferase to acetyl-CoA to form malonyl-CoA. This Phenylobacterium zucineum (strain HLK1) protein is Acetyl-coenzyme A carboxylase carboxyl transferase subunit alpha.